The primary structure comprises 256 residues: Ribosomal RNA small subunit methyltransferase J (256 aa).

S-adenosyl-L-methionine is bound by residues 101-102, 117-118, and D174; these read RD and ER.

It belongs to the methyltransferase superfamily. RsmJ family.

The protein localises to the cytoplasm. It carries out the reaction guanosine(1516) in 16S rRNA + S-adenosyl-L-methionine = N(2)-methylguanosine(1516) in 16S rRNA + S-adenosyl-L-homocysteine + H(+). Functionally, specifically methylates the guanosine in position 1516 of 16S rRNA. The protein is Ribosomal RNA small subunit methyltransferase J of Chromohalobacter salexigens (strain ATCC BAA-138 / DSM 3043 / CIP 106854 / NCIMB 13768 / 1H11).